A 470-amino-acid polypeptide reads, in one-letter code: ATP synthase subunit beta (470 aa).

148–155 provides a ligand contact to ATP; sequence GGAGVGKT.

The protein belongs to the ATPase alpha/beta chains family. As to quaternary structure, F-type ATPases have 2 components, CF(1) - the catalytic core - and CF(0) - the membrane proton channel. CF(1) has five subunits: alpha(3), beta(3), gamma(1), delta(1), epsilon(1). CF(0) has three main subunits: a(1), b(2) and c(9-12). The alpha and beta chains form an alternating ring which encloses part of the gamma chain. CF(1) is attached to CF(0) by a central stalk formed by the gamma and epsilon chains, while a peripheral stalk is formed by the delta and b chains.

The protein localises to the cell inner membrane. The enzyme catalyses ATP + H2O + 4 H(+)(in) = ADP + phosphate + 5 H(+)(out). Functionally, produces ATP from ADP in the presence of a proton gradient across the membrane. The catalytic sites are hosted primarily by the beta subunits. This Saccharophagus degradans (strain 2-40 / ATCC 43961 / DSM 17024) protein is ATP synthase subunit beta.